Reading from the N-terminus, the 102-residue chain is MLCAIYKSKKKEGMYLYVAKRDYFDEVPETLKMAFGTPNFVMLFNLLGEKKLVRAENQEVLKHIQEQGFYLQMPPKQESLFEQFKAEQKAKQTKNKTALKVR.

The YcgL domain occupies 1-85; sequence MLCAIYKSKK…KQESLFEQFK (85 aa).

This chain is YcgL domain-containing protein MS1047, found in Mannheimia succiniciproducens (strain KCTC 0769BP / MBEL55E).